Consider the following 326-residue polypeptide: Homocysteine S-methyltransferase 1 (326 aa).

The Hcy-binding domain maps to 9 to 323; the sequence is LLEDLIEKCG…STIKAISRDL (315 aa). Residues C241, C308, and C309 each coordinate Zn(2+).

Zn(2+) is required as a cofactor. Expressed in roots, young leaves, florets and flowers. Not detected in old leaves.

The enzyme catalyses S-methyl-L-methionine + L-homocysteine = 2 L-methionine + H(+). Its activity is regulated as follows. Inhibited by L-methionine. In terms of biological role, catalyzes methyl transfer from S-methylmethionine to homocysteine. The highest preference is for DL-homocysteine &gt;&gt; DL-cysteine. Has no selenocysteine methyltransferase activity. In Brassica oleracea var. italica (Broccoli), this protein is Homocysteine S-methyltransferase 1 (HMT1).